A 197-amino-acid polypeptide reads, in one-letter code: uncharacterized protein (197 aa).

Residues 11–31 form a helical membrane-spanning segment; it reads ICGFSLVALTIAGIVGGVYLV.

It localises to the membrane. This is an uncharacterized protein from Mycoplasma pneumoniae (strain ATCC 29342 / M129 / Subtype 1) (Mycoplasmoides pneumoniae).